The following is a 402-amino-acid chain: O-glucosyltransferase rumi homolog (402 aa).

The signal sequence occupies residues 1-20; that stretch reads MPYLEIVLALLVLSFQLGHS. Disulfide bonds link Cys67/Cys74, Cys72/Cys375, Cys118/Cys124, and Cys279/Cys302. An N-linked (GlcNAc...) asparagine glycan is attached at Asn71. Asp149 (proton donor/acceptor) is an active-site residue. The tract at residues 189-194 is interaction with the consensus sequence C-X-S-X-[PA]-C in peptide substrates; sequence AISLYP. Residues 226–230, Arg234, 273–275, and 291–295 contribute to the UDP-alpha-D-glucose site; these read RGSRT, VRL, and AASFR.

The protein belongs to the glycosyltransferase 90 family.

Its subcellular location is the endoplasmic reticulum lumen. It localises to the secreted. The protein operates within protein modification; protein glycosylation. In terms of biological role, protein O-glucosyltransferase. Catalyzes the reaction that attaches glucose through an O-glycosidic linkage to a conserved serine residue found in the consensus sequence C-X-S-X-[PA]-C in epidermal growth factor-like repeats. Regulates Notch signaling by glucosylating Notch in the ER, glucosylation is required for the correct folding and cleavage of Notch. The protein is O-glucosyltransferase rumi homolog of Aedes aegypti (Yellowfever mosquito).